A 64-amino-acid polypeptide reads, in one-letter code: Large ribosomal subunit protein bL28 (64 aa).

This sequence belongs to the bacterial ribosomal protein bL28 family.

This is Large ribosomal subunit protein bL28 from Desulfotalea psychrophila (strain LSv54 / DSM 12343).